The primary structure comprises 341 residues: Allergen Mag (341 aa).

This Dermatophagoides farinae (American house dust mite) protein is Allergen Mag (MAG).